The chain runs to 283 residues: Bis(5'-nucleosyl)-tetraphosphatase, symmetrical (283 aa).

It belongs to the Ap4A hydrolase family.

It catalyses the reaction P(1),P(4)-bis(5'-adenosyl) tetraphosphate + H2O = 2 ADP + 2 H(+). In terms of biological role, hydrolyzes diadenosine 5',5'''-P1,P4-tetraphosphate to yield ADP. The chain is Bis(5'-nucleosyl)-tetraphosphatase, symmetrical from Pseudomonas paraeruginosa (strain DSM 24068 / PA7) (Pseudomonas aeruginosa (strain PA7)).